Here is a 576-residue protein sequence, read N- to C-terminus: Arginine--tRNA ligase (576 aa).

Positions 122-132 match the 'HIGH' region motif; the sequence is PNVAKQMHVGH.

The protein belongs to the class-I aminoacyl-tRNA synthetase family. As to quaternary structure, monomer.

It localises to the cytoplasm. It catalyses the reaction tRNA(Arg) + L-arginine + ATP = L-arginyl-tRNA(Arg) + AMP + diphosphate. The protein is Arginine--tRNA ligase of Yersinia enterocolitica serotype O:8 / biotype 1B (strain NCTC 13174 / 8081).